A 368-amino-acid polypeptide reads, in one-letter code: Repressor ROX1 (368 aa).

A DNA-binding region (HMG box) is located at residues 10–83 (IPRPKNAFIL…EHERKYPEYK (74 aa)). Disordered regions lie at residues 100–121 (IEQQ…QPQL) and 242–273 (SSQT…SSVL). The span at 102–121 (QQQQQQQKEQQQQKQSQPQL) shows a compositional bias: low complexity.

Its subcellular location is the nucleus. Its function is as follows. Transcription factor that represses the expression of HEM13, COX5B, ANB1, CYC7 or AAC3 (hypoxic function). Binds to the DNA sequence 5'-RRRTAACAAGAG-3'. The protein is Repressor ROX1 (ROX1) of Saccharomyces cerevisiae (strain ATCC 204508 / S288c) (Baker's yeast).